We begin with the raw amino-acid sequence, 197 residues long: Phosphoheptose isomerase (197 aa).

Positions 34-196 (MVHCLLGGNK…DRTLFPQDEQ (163 aa)) constitute an SIS domain. 49–51 (NGG) is a binding site for substrate. His58 and Glu62 together coordinate Zn(2+). Substrate is bound by residues Glu62, 91–92 (ND), 117–119 (STS), Ser122, and Gln172. Gln172 and His180 together coordinate Zn(2+).

Belongs to the SIS family. GmhA subfamily. As to quaternary structure, homotetramer. Requires Zn(2+) as cofactor.

Its subcellular location is the cytoplasm. It carries out the reaction 2 D-sedoheptulose 7-phosphate = D-glycero-alpha-D-manno-heptose 7-phosphate + D-glycero-beta-D-manno-heptose 7-phosphate. It participates in carbohydrate biosynthesis; D-glycero-D-manno-heptose 7-phosphate biosynthesis; D-glycero-alpha-D-manno-heptose 7-phosphate and D-glycero-beta-D-manno-heptose 7-phosphate from sedoheptulose 7-phosphate: step 1/1. Catalyzes the isomerization of sedoheptulose 7-phosphate in D-glycero-D-manno-heptose 7-phosphate. This Shewanella sediminis (strain HAW-EB3) protein is Phosphoheptose isomerase.